Consider the following 591-residue polypeptide: Flagellar hook protein FlgE (591 aa).

Belongs to the flagella basal body rod proteins family.

It is found in the bacterial flagellum basal body. The protein is Flagellar hook protein FlgE (flgE) of Caulobacter vibrioides (strain ATCC 19089 / CIP 103742 / CB 15) (Caulobacter crescentus).